Consider the following 426-residue polypeptide: Serine--tRNA ligase (426 aa).

An L-serine-binding site is contributed by 233-235; the sequence is TAE. 264-266 contacts ATP; that stretch reads RSE. Position 287 (glutamate 287) interacts with L-serine. 351–354 serves as a coordination point for ATP; that stretch reads EISS. Serine 387 contacts L-serine.

Belongs to the class-II aminoacyl-tRNA synthetase family. Type-1 seryl-tRNA synthetase subfamily. As to quaternary structure, homodimer. The tRNA molecule binds across the dimer.

It localises to the cytoplasm. It catalyses the reaction tRNA(Ser) + L-serine + ATP = L-seryl-tRNA(Ser) + AMP + diphosphate + H(+). The catalysed reaction is tRNA(Sec) + L-serine + ATP = L-seryl-tRNA(Sec) + AMP + diphosphate + H(+). It functions in the pathway aminoacyl-tRNA biosynthesis; selenocysteinyl-tRNA(Sec) biosynthesis; L-seryl-tRNA(Sec) from L-serine and tRNA(Sec): step 1/1. Its function is as follows. Catalyzes the attachment of serine to tRNA(Ser). Is also able to aminoacylate tRNA(Sec) with serine, to form the misacylated tRNA L-seryl-tRNA(Sec), which will be further converted into selenocysteinyl-tRNA(Sec). In Clostridium botulinum (strain Okra / Type B1), this protein is Serine--tRNA ligase.